The chain runs to 274 residues: 2,3,4,5-tetrahydropyridine-2,6-dicarboxylate N-succinyltransferase (274 aa).

Positions 104 and 141 each coordinate substrate.

The protein belongs to the transferase hexapeptide repeat family. As to quaternary structure, homotrimer.

The protein localises to the cytoplasm. The enzyme catalyses (S)-2,3,4,5-tetrahydrodipicolinate + succinyl-CoA + H2O = (S)-2-succinylamino-6-oxoheptanedioate + CoA. It functions in the pathway amino-acid biosynthesis; L-lysine biosynthesis via DAP pathway; LL-2,6-diaminopimelate from (S)-tetrahydrodipicolinate (succinylase route): step 1/3. The chain is 2,3,4,5-tetrahydropyridine-2,6-dicarboxylate N-succinyltransferase from Shewanella denitrificans (strain OS217 / ATCC BAA-1090 / DSM 15013).